A 404-amino-acid polypeptide reads, in one-letter code: CinA-like protein (404 aa).

The protein belongs to the CinA family.

The chain is CinA-like protein from Deinococcus radiodurans (strain ATCC 13939 / DSM 20539 / JCM 16871 / CCUG 27074 / LMG 4051 / NBRC 15346 / NCIMB 9279 / VKM B-1422 / R1).